Here is a 315-residue protein sequence, read N- to C-terminus: Methionyl-tRNA formyltransferase (315 aa).

A (6S)-5,6,7,8-tetrahydrofolate-binding site is contributed by 113–116; that stretch reads SLLP.

It belongs to the Fmt family.

The enzyme catalyses L-methionyl-tRNA(fMet) + (6R)-10-formyltetrahydrofolate = N-formyl-L-methionyl-tRNA(fMet) + (6S)-5,6,7,8-tetrahydrofolate + H(+). In terms of biological role, attaches a formyl group to the free amino group of methionyl-tRNA(fMet). The formyl group appears to play a dual role in the initiator identity of N-formylmethionyl-tRNA by promoting its recognition by IF2 and preventing the misappropriation of this tRNA by the elongation apparatus. This chain is Methionyl-tRNA formyltransferase, found in Escherichia coli O17:K52:H18 (strain UMN026 / ExPEC).